The chain runs to 765 residues: Myotubularin-related protein 10-A (765 aa).

Residues phenylalanine 209–tyrosine 650 enclose the Myotubularin phosphatase domain.

Belongs to the protein-tyrosine phosphatase family. Non-receptor class myotubularin subfamily.

The polypeptide is Myotubularin-related protein 10-A (mtmr10-a) (Xenopus laevis (African clawed frog)).